Here is a 499-residue protein sequence, read N- to C-terminus: Circadian clock oscillator protein KaiC (499 aa).

KaiC domains follow at residues 1–243 (MQSS…VSVF) and 257–499 (VRIS…DERA). Gly45, Thr46, Gly47, Lys48, Thr49, Ser85, Lys220, Leu221, Arg222, Thr224, His226, Thr286, Gly287, Thr288, Gly289, Lys290, Thr291, and Leu292 together coordinate ATP. Mg(2+) is bound at residue Thr49. Thr291 lines the Mg(2+) pocket. Glu314 provides a ligand contact to Mg(2+). Position 327 (Trp327) interacts with ATP. The residue at position 427 (Ser427) is a Phosphoserine; by autocatalysis. Position 428 is a phosphothreonine; by autocatalysis (Thr428). 7 residues coordinate ATP: Arg447, Lys453, Met454, Arg455, Ser457, His459, and Lys461.

This sequence belongs to the KaiC family. As to quaternary structure, homohexamer; hexamerization is dependent on ATP-binding. Component of the KaiBC complex. KaiC interacts with SasA, activating its autokinase function and leading to RpaA activation. The cofactor is Mg(2+). In terms of processing, phosphorylated on serine and threonine residues by autocatalysis. Has a 4 step phosphorylation cycle; the autokinase acts first on Thr-428, then Ser-427. When Ser-427 is modified KaiC switches to an autophosphatase mode, acting first on phospho-Thr-428 then phospho-Ser-427.

It carries out the reaction L-seryl-[protein] + ATP = O-phospho-L-seryl-[protein] + ADP + H(+). The enzyme catalyses L-threonyl-[protein] + ATP = O-phospho-L-threonyl-[protein] + ADP + H(+). The catalysed reaction is ATP + H2O = ADP + phosphate + H(+). In terms of biological role, central component of the KaiBC oscillator complex, which constitutes the main circadian regulator in cyanobacteria. Its composition changes during the circadian cycle to control KaiC phosphorylation. Autophosphorylates and has a weak ATPase activity; ATPase activity defines the circadian period. The chain is Circadian clock oscillator protein KaiC from Prochlorococcus marinus (strain MIT 9313).